A 264-amino-acid chain; its full sequence is tRNA (guanine-N(1)-)-methyltransferase (264 aa).

S-adenosyl-L-methionine-binding positions include Gly-125 and Leu-145–Leu-150.

The protein belongs to the RNA methyltransferase TrmD family. Homodimer.

The protein resides in the cytoplasm. The catalysed reaction is guanosine(37) in tRNA + S-adenosyl-L-methionine = N(1)-methylguanosine(37) in tRNA + S-adenosyl-L-homocysteine + H(+). Its function is as follows. Specifically methylates guanosine-37 in various tRNAs. The polypeptide is tRNA (guanine-N(1)-)-methyltransferase (Burkholderia ambifaria (strain ATCC BAA-244 / DSM 16087 / CCUG 44356 / LMG 19182 / AMMD) (Burkholderia cepacia (strain AMMD))).